Consider the following 139-residue polypeptide: Hydrogenase maturation factor HypA (139 aa).

A Ni(2+)-binding site is contributed by His-2. Positions 73, 76, 110, and 113 each coordinate Zn(2+).

Belongs to the HypA/HybF family.

In terms of biological role, involved in the maturation of [NiFe] hydrogenases. Required for nickel insertion into the metal center of the hydrogenase. The chain is Hydrogenase maturation factor HypA from Pyrococcus horikoshii (strain ATCC 700860 / DSM 12428 / JCM 9974 / NBRC 100139 / OT-3).